The chain runs to 316 residues: Retinol dehydrogenase 7 (316 aa).

Residue 33 to 57 (FITGCDSGFGNLLARQLDRRGMRVL) coordinates NADP(+). Residue serine 163 participates in substrate binding. Residue tyrosine 175 is the Proton acceptor of the active site.

The protein belongs to the short-chain dehydrogenases/reductases (SDR) family. As to expression, highly expressed in liver. Also expressed in lung, eye, kidney, and brain.

Its subcellular location is the microsome. The protein localises to the endoplasmic reticulum. It catalyses the reaction all-trans-retinol--[retinol-binding protein] + NAD(+) = all-trans-retinal--[retinol-binding protein] + NADH + H(+). The protein operates within cofactor metabolism; retinol metabolism. Functionally, acts on androgens and retinols, i.e. has steroid 3-alpha- and 17-beta-dehydrogenase and cis/trans-retinol catalytic activities. The protein is Retinol dehydrogenase 7 (Rdh7) of Mus musculus (Mouse).